Consider the following 114-residue polypeptide: UPF0473 protein OEOE_1164 (114 aa).

This sequence belongs to the UPF0473 family.

The polypeptide is UPF0473 protein OEOE_1164 (Oenococcus oeni (strain ATCC BAA-331 / PSU-1)).